We begin with the raw amino-acid sequence, 353 residues long: Methylthioribose-1-phosphate isomerase (353 aa).

Substrate is bound by residues 51-53 (RGA), Arg94, and Gln203. The active-site Proton donor is Asp244. Position 254–255 (254–255 (NK)) interacts with substrate.

This sequence belongs to the eIF-2B alpha/beta/delta subunits family. MtnA subfamily.

The enzyme catalyses 5-(methylsulfanyl)-alpha-D-ribose 1-phosphate = 5-(methylsulfanyl)-D-ribulose 1-phosphate. The protein operates within amino-acid biosynthesis; L-methionine biosynthesis via salvage pathway; L-methionine from S-methyl-5-thio-alpha-D-ribose 1-phosphate: step 1/6. Its function is as follows. Catalyzes the interconversion of methylthioribose-1-phosphate (MTR-1-P) into methylthioribulose-1-phosphate (MTRu-1-P). The polypeptide is Methylthioribose-1-phosphate isomerase (Nostoc punctiforme (strain ATCC 29133 / PCC 73102)).